Reading from the N-terminus, the 179-residue chain is Large ribosomal subunit protein uL5 (179 aa).

It belongs to the universal ribosomal protein uL5 family. In terms of assembly, part of the 50S ribosomal subunit; part of the 5S rRNA/L5/L18/L25 subcomplex. Contacts the 5S rRNA and the P site tRNA. Forms a bridge to the 30S subunit in the 70S ribosome.

Functionally, this is one of the proteins that bind and probably mediate the attachment of the 5S RNA into the large ribosomal subunit, where it forms part of the central protuberance. In the 70S ribosome it contacts protein S13 of the 30S subunit (bridge B1b), connecting the 2 subunits; this bridge is implicated in subunit movement. Contacts the P site tRNA; the 5S rRNA and some of its associated proteins might help stabilize positioning of ribosome-bound tRNAs. This is Large ribosomal subunit protein uL5 from Staphylococcus haemolyticus (strain JCSC1435).